The following is a 210-amino-acid chain: Pyridoxine/pyridoxamine 5'-phosphate oxidase (210 aa).

Substrate-binding positions include Arg-7 to Tyr-10 and Lys-65. FMN is bound by residues Arg-60–Lys-65, Phe-75–Thr-76, Arg-81, Lys-82, and Gln-104. Substrate is bound by residues Tyr-122, Arg-126, and Ser-130. FMN-binding positions include Gln-139–Ser-140 and Trp-183. Arg-189 to His-191 contacts substrate. Arg-193 provides a ligand contact to FMN.

The protein belongs to the pyridoxamine 5'-phosphate oxidase family. As to quaternary structure, homodimer. Requires FMN as cofactor.

It carries out the reaction pyridoxamine 5'-phosphate + O2 + H2O = pyridoxal 5'-phosphate + H2O2 + NH4(+). It catalyses the reaction pyridoxine 5'-phosphate + O2 = pyridoxal 5'-phosphate + H2O2. It participates in cofactor metabolism; pyridoxal 5'-phosphate salvage; pyridoxal 5'-phosphate from pyridoxamine 5'-phosphate: step 1/1. The protein operates within cofactor metabolism; pyridoxal 5'-phosphate salvage; pyridoxal 5'-phosphate from pyridoxine 5'-phosphate: step 1/1. Its function is as follows. Catalyzes the oxidation of either pyridoxine 5'-phosphate (PNP) or pyridoxamine 5'-phosphate (PMP) into pyridoxal 5'-phosphate (PLP). The protein is Pyridoxine/pyridoxamine 5'-phosphate oxidase of Neisseria gonorrhoeae (strain ATCC 700825 / FA 1090).